We begin with the raw amino-acid sequence, 255 residues long: Large ribosomal subunit protein uL4 (255 aa).

The protein belongs to the universal ribosomal protein uL4 family. As to quaternary structure, part of the 50S ribosomal subunit.

In terms of biological role, one of the primary rRNA binding proteins, this protein initially binds near the 5'-end of the 23S rRNA. It is important during the early stages of 50S assembly. It makes multiple contacts with different domains of the 23S rRNA in the assembled 50S subunit and ribosome. Functionally, forms part of the polypeptide exit tunnel. This is Large ribosomal subunit protein uL4 from Thermoplasma acidophilum (strain ATCC 25905 / DSM 1728 / JCM 9062 / NBRC 15155 / AMRC-C165).